We begin with the raw amino-acid sequence, 443 residues long: tRNA-2-methylthio-N(6)-dimethylallyladenosine synthase (443 aa).

The region spanning 1–114 (MRFYIKTFGC…VTEAVKRALQ (114 aa)) is the MTTase N-terminal domain. Positions 10, 46, 79, 150, 154, and 157 each coordinate [4Fe-4S] cluster. The 232-residue stretch at 136–367 (RSSKHHAWVT…MNLQKRINRK (232 aa)) folds into the Radical SAM core domain. One can recognise a TRAM domain in the interval 370 to 431 (ERYKGKTVRV…AGPLYGKVVW (62 aa)).

Belongs to the methylthiotransferase family. MiaB subfamily. Monomer. The cofactor is [4Fe-4S] cluster.

The protein localises to the cytoplasm. It catalyses the reaction N(6)-dimethylallyladenosine(37) in tRNA + (sulfur carrier)-SH + AH2 + 2 S-adenosyl-L-methionine = 2-methylsulfanyl-N(6)-dimethylallyladenosine(37) in tRNA + (sulfur carrier)-H + 5'-deoxyadenosine + L-methionine + A + S-adenosyl-L-homocysteine + 2 H(+). Catalyzes the methylthiolation of N6-(dimethylallyl)adenosine (i(6)A), leading to the formation of 2-methylthio-N6-(dimethylallyl)adenosine (ms(2)i(6)A) at position 37 in tRNAs that read codons beginning with uridine. This chain is tRNA-2-methylthio-N(6)-dimethylallyladenosine synthase, found in Thermotoga sp. (strain RQ2).